The primary structure comprises 266 residues: 22 kDa alpha-zein 8 (266 aa).

Residues Met-1 to Ala-21 form the signal peptide.

The protein belongs to the zein family.

Functionally, zeins are major seed storage proteins. This chain is 22 kDa alpha-zein 8, found in Zea mays (Maize).